The following is a 1373-amino-acid chain: DNA-directed RNA polymerase subunit beta (1373 aa).

The protein belongs to the RNA polymerase beta chain family. The RNAP catalytic core consists of 2 alpha, 1 beta, 1 beta' and 1 omega subunit. When a sigma factor is associated with the core the holoenzyme is formed, which can initiate transcription.

It catalyses the reaction RNA(n) + a ribonucleoside 5'-triphosphate = RNA(n+1) + diphosphate. In terms of biological role, DNA-dependent RNA polymerase catalyzes the transcription of DNA into RNA using the four ribonucleoside triphosphates as substrates. The polypeptide is DNA-directed RNA polymerase subunit beta (Rickettsia rickettsii (strain Iowa)).